The following is a 550-amino-acid chain: Dipeptide-binding protein (550 aa).

Residues 1-22 form the signal peptide; it reads MKQAKIIGLSTVIALSGIILVA. A lipid anchor (N-palmitoyl cysteine) is attached at Cys23. Cys23 carries the S-diacylglycerol cysteine lipid modification.

This sequence belongs to the bacterial solute-binding protein 5 family. As to quaternary structure, the complex is composed of two ATP-binding proteins (DppD and DppF), two transmembrane proteins (DppB and DppC) and a solute-binding protein (DppA).

The protein localises to the cell membrane. In terms of biological role, part of the ABC transporter DppABCDF involved in dipeptide transport. Binds di- and tripeptides with high affinity. Requires a free N-terminal alpha-amino group and an alpha-peptide bound contiguous with the N-terminal amino group, has a strong selectivity for L-residues, and shows preference for dipeptides containing methionine or arginine, followed by hydrophobic tripeptides consisting of leucine or valine residues. In Lactococcus lactis subsp. cremoris (strain MG1363), this protein is Dipeptide-binding protein.